Consider the following 202-residue polypeptide: Urease accessory protein UreG (202 aa).

Position 13 to 20 (13 to 20 (GPVGAGKT)) interacts with GTP.

The protein belongs to the SIMIBI class G3E GTPase family. UreG subfamily. As to quaternary structure, homodimer. UreD, UreF and UreG form a complex that acts as a GTP-hydrolysis-dependent molecular chaperone, activating the urease apoprotein by helping to assemble the nickel containing metallocenter of UreC. The UreE protein probably delivers the nickel.

It localises to the cytoplasm. In terms of biological role, facilitates the functional incorporation of the urease nickel metallocenter. This process requires GTP hydrolysis, probably effectuated by UreG. The polypeptide is Urease accessory protein UreG (Dinoroseobacter shibae (strain DSM 16493 / NCIMB 14021 / DFL 12)).